Reading from the N-terminus, the 341-residue chain is D-aspartate oxidase (341 aa).

8 residues coordinate FAD: D36, R37, T43, S44, M50, G307, I311, and S312. Positions 339–341 (SKL) match the Microbody targeting signal motif.

This sequence belongs to the DAMOX/DASOX family. Tetramer. Interacts with PEX5; the interaction is direct and required for localization of DDO to the peroxisome. FAD is required as a cofactor. Expressed in liver and kidney (at protein level). In the brain, expressed in the frontal, temporal, and occipital lobes of the cortex, hippocampus, striatum, diencephalon, brainstem, cerebellum, spinal cord, plexus choroiderus and ependyma (at protein level). Also expressed in the lung, muscle, heart, spleen, small intestine and testis (at protein level).

The protein resides in the peroxisome matrix. It localises to the cytoplasm. The protein localises to the cytosol. It catalyses the reaction D-aspartate + O2 + H2O = oxaloacetate + H2O2 + NH4(+). It carries out the reaction D-glutamate + O2 + H2O = H2O2 + 2-oxoglutarate + NH4(+). Its activity is regulated as follows. Inhibited by aminooxyacetic acid, malonate, meso-tartrate and potassium bromide. Selectively catalyzes the oxidative deamination of acidic amino acids. Suppresses the level of D-aspartate in the brain, an amino acid that can act as an agonist for glutamate receptors. Protects the organism from the toxicity of D-amino acids. May also function in the intestine. This chain is D-aspartate oxidase, found in Rattus norvegicus (Rat).